The primary structure comprises 263 residues: 3-methyl-2-oxobutanoate hydroxymethyltransferase (263 aa).

Positions 43 and 82 each coordinate Mg(2+). 3-methyl-2-oxobutanoate contacts are provided by residues 43–44 (DS), D82, and K111. E113 is a Mg(2+) binding site. The active-site Proton acceptor is E179.

Belongs to the PanB family. As to quaternary structure, homodecamer; pentamer of dimers. Mg(2+) serves as cofactor.

The protein localises to the cytoplasm. It catalyses the reaction 3-methyl-2-oxobutanoate + (6R)-5,10-methylene-5,6,7,8-tetrahydrofolate + H2O = 2-dehydropantoate + (6S)-5,6,7,8-tetrahydrofolate. The protein operates within cofactor biosynthesis; (R)-pantothenate biosynthesis; (R)-pantoate from 3-methyl-2-oxobutanoate: step 1/2. In terms of biological role, catalyzes the reversible reaction in which hydroxymethyl group from 5,10-methylenetetrahydrofolate is transferred onto alpha-ketoisovalerate to form ketopantoate. This is 3-methyl-2-oxobutanoate hydroxymethyltransferase from Neisseria meningitidis serogroup A / serotype 4A (strain DSM 15465 / Z2491).